Consider the following 131-residue polypeptide: Small ribosomal subunit protein uS8 (131 aa).

It belongs to the universal ribosomal protein uS8 family. Part of the 30S ribosomal subunit. Contacts proteins S5 and S12.

Its function is as follows. One of the primary rRNA binding proteins, it binds directly to 16S rRNA central domain where it helps coordinate assembly of the platform of the 30S subunit. The polypeptide is Small ribosomal subunit protein uS8 (Polaromonas naphthalenivorans (strain CJ2)).